Reading from the N-terminus, the 151-residue chain is UPF0208 membrane protein KPN78578_26420 (151 aa).

2 helical membrane passes run 46 to 65 and 69 to 91; these read YAIR…QIAL and LGPA…WWLG.

This sequence belongs to the UPF0208 family.

It localises to the cell inner membrane. This Klebsiella pneumoniae subsp. pneumoniae (strain ATCC 700721 / MGH 78578) protein is UPF0208 membrane protein KPN78578_26420.